The following is a 485-amino-acid chain: Glutamyl-tRNA(Gln) amidotransferase subunit A (485 aa).

Residues Lys78 and Ser153 each act as charge relay system in the active site. Ser177 functions as the Acyl-ester intermediate in the catalytic mechanism.

The protein belongs to the amidase family. GatA subfamily. In terms of assembly, heterotrimer of A, B and C subunits.

It carries out the reaction L-glutamyl-tRNA(Gln) + L-glutamine + ATP + H2O = L-glutaminyl-tRNA(Gln) + L-glutamate + ADP + phosphate + H(+). In terms of biological role, allows the formation of correctly charged Gln-tRNA(Gln) through the transamidation of misacylated Glu-tRNA(Gln) in organisms which lack glutaminyl-tRNA synthetase. The reaction takes place in the presence of glutamine and ATP through an activated gamma-phospho-Glu-tRNA(Gln). The chain is Glutamyl-tRNA(Gln) amidotransferase subunit A from Bacillus cereus (strain ATCC 14579 / DSM 31 / CCUG 7414 / JCM 2152 / NBRC 15305 / NCIMB 9373 / NCTC 2599 / NRRL B-3711).